The primary structure comprises 176 residues: Tubulin polymerization-promoting protein family member 3 (176 aa).

Residue alanine 2 is modified to N-acetylalanine. The segment at 132-152 is disordered; the sequence is TGSHKERFDESGKGKGIAGRQ. Residues 134 to 144 are compositionally biased toward basic and acidic residues; that stretch reads SHKERFDESGK.

This sequence belongs to the TPPP family.

Its subcellular location is the cytoplasm. The protein localises to the cytoskeleton. Regulator of microtubule dynamic that has microtubule bundling activity. Required for embryo implantation; possibly by regulating beta-catenin. Also required for decidualization via regulation of beta-catenin. In Mus musculus (Mouse), this protein is Tubulin polymerization-promoting protein family member 3.